Reading from the N-terminus, the 197-residue chain is Dephospho-CoA kinase (197 aa).

The DPCK domain maps to 2-197 (IVGLTGGIAS…YQQILSLNAA (196 aa)). 10 to 15 (ASGKTL) provides a ligand contact to ATP.

This sequence belongs to the CoaE family.

It localises to the cytoplasm. It catalyses the reaction 3'-dephospho-CoA + ATP = ADP + CoA + H(+). It participates in cofactor biosynthesis; coenzyme A biosynthesis; CoA from (R)-pantothenate: step 5/5. Its function is as follows. Catalyzes the phosphorylation of the 3'-hydroxyl group of dephosphocoenzyme A to form coenzyme A. In Dichelobacter nodosus (Bacteroides nodosus), this protein is Dephospho-CoA kinase.